A 371-amino-acid chain; its full sequence is Glycosyltransferase 8 domain-containing protein 1 (371 aa).

The Cytoplasmic portion of the chain corresponds to 1–7 (MSFRKVH). The chain crosses the membrane as a helical; Signal-anchor for type II membrane protein span at residues 8-28 (IAIILLAAVVFLLILHHNILG). The Lumenal portion of the chain corresponds to 29–371 (LTDILTRQSS…RRHGEADGTK (343 aa)). 3 N-linked (GlcNAc...) asparagine glycosylation sites follow: N104, N249, and N257.

Belongs to the glycosyltransferase 8 family.

It is found in the membrane. This chain is Glycosyltransferase 8 domain-containing protein 1 (glt8d1), found in Xenopus tropicalis (Western clawed frog).